We begin with the raw amino-acid sequence, 97 residues long: Putative regulatory protein Dole_1911 (97 aa).

Belongs to the RemA family.

The polypeptide is Putative regulatory protein Dole_1911 (Desulfosudis oleivorans (strain DSM 6200 / JCM 39069 / Hxd3) (Desulfococcus oleovorans)).